The following is a 359-amino-acid chain: GDSL esterase/lipase At2g30310 (359 aa).

Positions M1–T28 are cleaved as a signal peptide. S41 functions as the Nucleophile in the catalytic mechanism. N-linked (GlcNAc...) asparagine glycosylation is found at N103 and N325. Active-site residues include D333 and H336.

This sequence belongs to the 'GDSL' lipolytic enzyme family.

The protein localises to the secreted. In Arabidopsis thaliana (Mouse-ear cress), this protein is GDSL esterase/lipase At2g30310.